The primary structure comprises 445 residues: Tubulin beta-4 chain (445 aa).

The GTP site is built by Gln-11, Glu-69, Ser-138, Gly-142, Thr-143, Gly-144, Asn-204, and Asn-226. Mg(2+) is bound at residue Glu-69. Residues 421–445 (EYQQYQDATADEEYDEEEEEERDAE) form a disordered region. Positions 429–445 (TADEEYDEEEEEERDAE) are enriched in acidic residues.

The protein belongs to the tubulin family. Dimer of alpha and beta chains. A typical microtubule is a hollow water-filled tube with an outer diameter of 25 nm and an inner diameter of 15 nM. Alpha-beta heterodimers associate head-to-tail to form protofilaments running lengthwise along the microtubule wall with the beta-tubulin subunit facing the microtubule plus end conferring a structural polarity. Microtubules usually have 13 protofilaments but different protofilament numbers can be found in some organisms and specialized cells. Requires Mg(2+) as cofactor.

Its subcellular location is the cytoplasm. The protein localises to the cytoskeleton. Tubulin is the major constituent of microtubules, a cylinder consisting of laterally associated linear protofilaments composed of alpha- and beta-tubulin heterodimers. Microtubules grow by the addition of GTP-tubulin dimers to the microtubule end, where a stabilizing cap forms. Below the cap, tubulin dimers are in GDP-bound state, owing to GTPase activity of alpha-tubulin. This Triticum aestivum (Wheat) protein is Tubulin beta-4 chain (TUBB4).